A 203-amino-acid chain; its full sequence is MKVENHNLAVASLKTQRISAFKARLVAVLLKGKKVSDALAILAHTKKKASPIFTKLINSAVANAINNHGFEHSNLIIKAAIVNEGPTLKRFRPRAKGAASQILKRTSHFKVILASQNGGESQNQEYQEAEKNLVSKSPENTQSGALSQQIRGEQPQNDPENGVDSQLSAKTNSTTTAKKTDLADNNTKNDATNTVLAQEKEVK.

Polar residues-rich tracts occupy residues Gln116–Tyr126 and Val134–Leu167. The interval Gln116–Lys203 is disordered. A compositionally biased stretch (low complexity) spans Ser168–Thr194.

Belongs to the universal ribosomal protein uL22 family. In terms of assembly, part of the 50S ribosomal subunit.

This protein binds specifically to 23S rRNA; its binding is stimulated by other ribosomal proteins, e.g. L4, L17, and L20. It is important during the early stages of 50S assembly. It makes multiple contacts with different domains of the 23S rRNA in the assembled 50S subunit and ribosome. In terms of biological role, the globular domain of the protein is located near the polypeptide exit tunnel on the outside of the subunit, while an extended beta-hairpin is found that lines the wall of the exit tunnel in the center of the 70S ribosome. The polypeptide is Large ribosomal subunit protein uL22 (Mesomycoplasma hyopneumoniae (strain 232) (Mycoplasma hyopneumoniae)).